Here is a 71-residue protein sequence, read N- to C-terminus: Movement protein TGBp3 (71 aa).

Residues 1-4 (MWSD) are Lumenal-facing. A helical membrane pass occupies residues 5–27 (SLVSRICVPIIVVCTSIALLNVV). Residues 28–71 (SFRSECSCVVHISGAAIDIRGCSFTPDFIEYAKTLRVFNHRYQE) are Cytoplasmic-facing.

Belongs to the Tymovirales TGBp3 protein family.

The protein resides in the host endoplasmic reticulum membrane. Its function is as follows. Plays a role in viral cell-to-cell propagation, by facilitating genome transport to neighboring plant cells through plasmosdesmata. May induce the formation of granular vesicles derived from the Endoplasmic reticulum, which align on actin filaments. In Populus balsamifera (Balsam poplar), this protein is Movement protein TGBp3.